The chain runs to 2269 residues: Neuron navigator 3 (2269 aa).

The 108-residue stretch at Ser-55–Gln-162 folds into the Calponin-homology (CH) domain. Polar residues predominate over residues Thr-186–Tyr-207. Disordered regions lie at residues Thr-186–Leu-358 and Ser-388–Ser-532. Low complexity predominate over residues Gly-236–Ser-252. Composition is skewed to polar residues over residues Ala-267–Ala-291 and Ser-305–Leu-319. Positions Pro-323 to Pro-333 are enriched in pro residues. Polar residues predominate over residues Ala-346–Ser-356. Residues Pro-411–Ser-432 are compositionally biased toward low complexity. Polar residues predominate over residues Thr-505–Pro-518. A coiled-coil region spans residues Glu-644 to Gln-672. 6 disordered regions span residues Gly-692–Val-737, Ala-756–Glu-776, Val-836–Pro-1036, Ser-1050–Asp-1079, Val-1097–Cys-1412, and Gly-1461–Val-1487. Polar residues-rich tracts occupy residues Ser-699–Arg-716 and Pro-727–Val-737. Over residues Asp-847 to Asp-860 the composition is skewed to low complexity. Residues Gly-874–Asn-886 show a composition bias toward polar residues. A compositionally biased stretch (low complexity) spans Pro-919–Cys-932. The segment covering Gln-939–Ser-950 has biased composition (polar residues). The span at Gly-977–Lys-989 shows a compositional bias: basic and acidic residues. The segment covering Ser-1110 to Lys-1137 has biased composition (low complexity). Positions Gly-1163–Gln-1172 are enriched in polar residues. Composition is skewed to low complexity over residues Gly-1185 to Gly-1202 and Gly-1223 to Gly-1234. Residues Gly-1266–Gly-1276 are compositionally biased toward gly residues. The span at Ser-1292–Ser-1305 shows a compositional bias: low complexity. Polar residues-rich tracts occupy residues Asn-1313 to Ser-1339 and Arg-1354 to Ser-1363. Positions Thr-1381–Arg-1391 are enriched in basic and acidic residues. Positions Ser-1392–Cys-1412 are enriched in polar residues. A coiled-coil region spans residues Ser-1499–Ala-1586. 3 disordered regions span residues Gln-1602–Pro-1672, Asn-1756–Ser-1792, and Gly-2207–Leu-2269. Composition is skewed to low complexity over residues Ser-1605–Ala-1623 and Thr-1765–Ser-1792. Positions Cys-1697 to Thr-1765 form a coiled coil. Residues Tyr-2208–Asp-2224 are compositionally biased toward polar residues.

The protein belongs to the Nav/unc-53 family. Interacts with F-actin.

The protein localises to the nucleus outer membrane. The protein resides in the golgi apparatus. It is found in the cell projection. Its subcellular location is the lamellipodium. It localises to the filopodium. Functionally, involved in liver and heart organogenesis during embryo development. Plays a role in the migration of hepatoblasts from the intestinal endoderm during liver organogenesis; possibly by modulating actin polymerization during hepatoblast outgrowth. May be involved in neuron regeneration. This Danio rerio (Zebrafish) protein is Neuron navigator 3 (nav3).